A 623-amino-acid polypeptide reads, in one-letter code: MGKVVGIDLGTTNSVVAVMEGGKPTVITNSEGQRTTPSVVAYTKKGDLLVGQIAKRQAVINPENTFYSVKRFIGRKTSEVTEALRQVPYKVLQTEDIIKLDCPALGKQFASEEISAQVLRKLADDATKYLGETVTQAVITVPAYFNDSQRQATKDAGKIAGLEVLRIINEPTAASLSYGLDKKDNETILVFDLGGGTFDVSILEVGDGVFEVLATSGDTRLGGDDFDEKIVQWLVNEFKNDEGIDLTQDNQALQRLTEAAEKAKVELSTLTQSSINLPFISVTPEGPKHLEKDLTRAKFEELCSDLIDRCKTPIQNALKDAELSPSSIDQNVLVGGSTRIPAVQELVEQLLGKKPNQSVNPDEVVAVGAAVQAGVLGGEVKDILLLDVTPLSLGVETLGGITTKITPRNTIIPTKKSETFSTAVDNQPNVEIHVLQGERELAKDNKSLGTFRLDGIAPAARGVPQIEVTFDIDANGILSVTAKDKATNKQQSITISGASNLAKDEVERMVEEAEQNAASDKEKSEQIDVKNKADSLCYQTKKQLEELSSKLEAADKEKVEEVLTKLELAVQNDDLEGMKTLSEELQKNMMEVGQKVYTPDAGAEGGAAPSQDDAIETDFSTEK.

Positions Thr-598–Lys-623 are disordered.

It belongs to the heat shock protein 70 family.

The protein localises to the plastid. It is found in the chloroplast. In terms of biological role, acts as a chaperone. In Emiliania huxleyi (Coccolithophore), this protein is Chaperone protein dnaK.